We begin with the raw amino-acid sequence, 241 residues long: NAD-dependent protein deacetylase 2 (241 aa).

Residues 1–241 form the Deacetylase sirtuin-type domain; sequence MTGKPLVAIL…ALPALLRGLG (241 aa). Positions 13, 17, 25, 92, 94, 95, and 112 each coordinate NAD(+). V94 and D95 together coordinate nicotinamide. The active-site Proton acceptor is the H112. Positions 120, 123, 145, and 148 each coordinate Zn(2+). Positions 186, 187, 211, and 229 each coordinate NAD(+).

This sequence belongs to the sirtuin family. Class U subfamily. The cofactor is Zn(2+).

It is found in the cytoplasm. It carries out the reaction N(6)-acetyl-L-lysyl-[protein] + NAD(+) + H2O = 2''-O-acetyl-ADP-D-ribose + nicotinamide + L-lysyl-[protein]. NAD-dependent protein deacetylase which modulates the activities of several enzymes which are inactive in their acetylated form. The polypeptide is NAD-dependent protein deacetylase 2 (Streptomyces coelicolor (strain ATCC BAA-471 / A3(2) / M145)).